The chain runs to 118 residues: MARIAGVNIPDNKHAVISLTYIFGVGKTTAQKLCDATGVKPDAKVKDLSDEQLEALRTEVGKFTVEGDLRREVQMNIKRLKDLGCFRGLRHRHGLPVRGQRTKTNARTRKGPRKPIRK.

Residues 94–118 are disordered; it reads GLPVRGQRTKTNARTRKGPRKPIRK.

The protein belongs to the universal ribosomal protein uS13 family. In terms of assembly, part of the 30S ribosomal subunit. Forms a loose heterodimer with protein S19. Forms two bridges to the 50S subunit in the 70S ribosome.

Functionally, located at the top of the head of the 30S subunit, it contacts several helices of the 16S rRNA. In the 70S ribosome it contacts the 23S rRNA (bridge B1a) and protein L5 of the 50S subunit (bridge B1b), connecting the 2 subunits; these bridges are implicated in subunit movement. Contacts the tRNAs in the A and P-sites. The sequence is that of Small ribosomal subunit protein uS13 from Marinobacter nauticus (strain ATCC 700491 / DSM 11845 / VT8) (Marinobacter aquaeolei).